The primary structure comprises 152 residues: Complexin (152 aa).

The interval 1–119 is disordered; sequence MAAFIAKQMV…EEEDDDEFAK (119 aa). The segment covering 23–39 has biased composition (acidic residues); it reads DEGEKEGNENAEEEAAA. Composition is skewed to basic and acidic residues over residues 41–82 and 90–104; these read EEAR…VKEE and DEGR…KEEL. The tract at residues 59–75 is interaction with the SNARE complex; it reads EEEREEMRQTIRDKYGL. Position 149 is a cysteine methyl ester (Cys-149). Cys-149 is lipidated: S-farnesyl cysteine. Positions 150–152 are cleaved as a propeptide — removed in mature form; sequence SLQ.

It belongs to the complexin/synaphin family. Binds to the SNARE core complex containing SNAP25, synaptobrevin and syntaxin-1.

Its subcellular location is the membrane. The protein localises to the cytoplasm. It is found in the cytosol. Functionally, positively regulates a late step in synaptic vesicle exocytosis. The polypeptide is Complexin (cpx) (Doryteuthis pealeii (Longfin inshore squid)).